The chain runs to 687 residues: MEQGYGGYGAWSAGPANTQGTYGSGMTSWQGYENYNYYNAQNTSVPAGTPYSYGPASWEATKTNDGGLAAGSPAMHVASFAPEPCTDNSDSLIAKINQRLDMLSKEGGRGGISSGGEGVQDRDSSFRFQPYESYDARPCIPEHNPYRPGYGYDYDFDLGTDRNGSFGGTFNDCRDPAPERGSLDGFLRGRGQGRFQDRSNSSTFIRSDPFMPPSASEPLSTTWNELNYMGGRGLGGPSTSRPPPSLFSQSMAPDYSMMGMQGVGGFGGTMPYGCGRSQTRIRDWPRRRGFERFGPDNMGRKRKQFPLYEEPDAKLARADSDGDLSENDDGAGDLRSGDEEFRGEDDLCDSRKQRGEKEDEDEDVKKRREKQRRRDRMRDRAADRIQFACSVCKFRSFEDEEIQKHLQSKFHKETLRFISTKLPDKTVEFLQEYIINRNKKIEKRRQELLEKESPKPKPDPFKGIGQEHFFKKIEAAHCLACDMLIPAQHQLLQRHLHSVDHNHNRRLAAEQFKKTSLHVAKSVLNNKHIVKMLEKYLKGEDPFVNETADLETEGDENVGEEKEETPEEVAAEVLAEVITAAVKAVEGEGEPAAAHSDVLTEVEGPVDTAEASSDPHTEKLLEEQTCEAASETRSIEDKTRGEAAEARNEAAMPTADAGSTLPVIAIPGIMEDELEQTGAEAKDIPTE.

Positions 1–195 (MEQGYGGYGA…FLRGRGQGRF (195 aa)) are interaction with MCM2. Residues 1–210 (MEQGYGGYGA…SSTFIRSDPF (210 aa)) are interaction with DPY30. Residue serine 72 is modified to Phosphoserine. 2 disordered regions span residues 105–124 (KEGG…DRDS) and 185–218 (GFLR…ASEP). Arginine 109 carries the asymmetric dimethylarginine; alternate modification. Omega-N-methylarginine; alternate is present on arginine 109. Residues 109–118 (RGGISSGGEG) show a composition bias toward gly residues. The segment at 109–201 (RGGISSGGEG…QGRFQDRSNS (93 aa)) is interaction with DDX5. Residue serine 199 is modified to Phosphoserine. Arginine 232 and arginine 276 each carry omega-N-methylarginine. Residues 277 to 379 (SQTRIRDWPR…KQRRRDRMRD (103 aa)) are disordered. Composition is skewed to basic and acidic residues over residues 280–294 (RIRD…ERFG) and 311–320 (PDAKLARADS). Positions 286-303 (RRRGFERFGPDNMGRKRK) match the Bipartite nuclear localization signal motif. Lysine 314 is covalently cross-linked (Glycyl lysine isopeptide (Lys-Gly) (interchain with G-Cter in SUMO2)). Serine 320, serine 325, and serine 336 each carry phosphoserine. The span at 321-331 (DGDLSENDDGA) shows a compositional bias: acidic residues. The segment covering 335–357 (RSGDEEFRGEDDLCDSRKQRGEK) has biased composition (basic and acidic residues). Positions 384 to 447 (RIQFACSVCK…NKKIEKRRQE (64 aa)) are involved in chromatin-binding. 2 consecutive C2H2 AKAP95-type zinc fingers follow at residues 389–411 (CSVC…SKFH) and 478–501 (CLAC…SVDH). Positions 522 to 565 (SVLNNKHIVKMLEKYLKGEDPFVNETADLETEGDENVGEEKEET) are involved in condensin complex recruitment. Threonine 552 bears the Phosphothreonine mark. Residues 568 to 585 (EVAAEVLAEVITAAVKAV) form an RII-binding region. The segment at 572 to 589 (EVLAEVITAAVKAVEGEG) is required for interaction with MYCBP. The segment at 624-659 (QTCEAASETRSIEDKTRGEAAEARNEAAMPTADAGS) is disordered. Residues 633 to 648 (RSIEDKTRGEAAEARN) show a composition bias toward basic and acidic residues. Phosphoserine is present on serine 659.

Belongs to the AKAP95 family. As to quaternary structure, binds to the PKA RII-alpha regulatory subunit PRKAR2A. Interacts (via C-terminus) with FIGN. Interacts with NCAPD2, CCND3, CCNE1, MCM2, RPS6KA1, DDX5, PDE4A. Interacts with MYCBP; MYCBP is translocated to the nucleus and the interaction prevents the association of the PKA catalytic subunit leading to suppression of PKA activity. Interacts with CCND1, CASP3. Interacts with NFKB1; detetcted in the cytoplasm. Interacts with DPY30; mediating AKAP8 association with at least the MLL4/WBP7 HMT complex. Interacts with HDAC3; increased during mitosis. Interacts with GJA1; in the nucleus and in the nuclear membrane; the nuclear association increases with progress of cell cycle G1, S and G2 phase and decreases in M phase. Phosphorylated on tyrosine residues probably by SRC subfamily protein kinases; multiple phosphorylation is leading to dissociation from nuclear structures implicated in chromatin structural changes.

The protein resides in the nucleus matrix. Its subcellular location is the nucleus. The protein localises to the nucleolus. It is found in the cytoplasm. Its function is as follows. Anchoring protein that mediates the subcellular compartmentation of cAMP-dependent protein kinase (PKA type II). Acts as an anchor for a PKA-signaling complex onto mitotic chromosomes, which is required for maintenance of chromosomes in a condensed form throughout mitosis. Recruits condensin complex subunit NCAPD2 to chromosomes required for chromatin condensation; the function appears to be independent from PKA-anchoring. Specifically involved in recruitment of CAPD2 to, and condensation of maternal but not paternal chromosomes. May help to deliver cyclin D/E to CDK4 to facilitate cell cycle progression. Required for cell cycle G2/M transition and histone deacetylation during mitosis. In mitotic cells recruits HDAC3 to the vicinity of chromatin leading to deacetylation and subsequent phosphorylation at 'Ser-10' of histone H3; in this function may act redundantly with AKAP8L. Involved in nuclear retention of RPS6KA1 upon ERK activation thus inducing cell proliferation. May be involved in regulation of DNA replication by acting as scaffold for MCM2. Enhances HMT activity of the KMT2 family MLL4/WBP7 complex and is involved in transcriptional regulation. In a teratocarcinoma cell line is involved in retinoic acid-mediated induction of developmental genes implicating H3 'Lys-4' methylation. May be involved in recruitment of active CASP3 to the nucleus in apoptotic cells. May act as a carrier protein of GJA1 for its transport to the nucleus. May play a repressive role in the regulation of rDNA transcription. Preferentially binds GC-rich DNA in vitro. In cells, associates with ribosomal RNA (rRNA) chromatin, preferentially with rRNA promoter and transcribed regions. Involved in modulation of Toll-like receptor signaling. Required for the cAMP-dependent suppression of TNF-alpha in early stages of LPS-induced macrophage activation; the function probably implicates targeting of PKA to NFKB1. The sequence is that of A-kinase anchor protein 8 (Akap8) from Mus musculus (Mouse).